Here is a 284-residue protein sequence, read N- to C-terminus: Nucleotide-binding protein in ptsO 5'region (284 aa).

8–15 (GRSGSGKS) provides a ligand contact to ATP. 60-63 (DARN) provides a ligand contact to GTP.

It belongs to the RapZ-like family.

In terms of biological role, displays ATPase and GTPase activities. This chain is Nucleotide-binding protein in ptsO 5'region, found in Pseudomonas putida (Arthrobacter siderocapsulatus).